The chain runs to 548 residues: DNA ligase (548 aa).

ATP is bound at residue E252. K254 (N6-AMP-lysine intermediate) is an active-site residue. The ATP site is built by R259, R274, E303, F343, R414, and K420.

It belongs to the ATP-dependent DNA ligase family. Mg(2+) is required as a cofactor.

It carries out the reaction ATP + (deoxyribonucleotide)n-3'-hydroxyl + 5'-phospho-(deoxyribonucleotide)m = (deoxyribonucleotide)n+m + AMP + diphosphate.. Its function is as follows. DNA ligase that seals nicks in double-stranded DNA during DNA replication, DNA recombination and DNA repair. This Natronomonas pharaonis (strain ATCC 35678 / DSM 2160 / CIP 103997 / JCM 8858 / NBRC 14720 / NCIMB 2260 / Gabara) (Halobacterium pharaonis) protein is DNA ligase.